Reading from the N-terminus, the 516-residue chain is Cysteine--tRNA ligase (516 aa).

Residue C32 coordinates Zn(2+). The short motif at 34 to 44 (PTVYMYAHIGN) is the 'HIGH' region element. The Zn(2+) site is built by C230, H255, and E259. The 'KMSKS' region motif lies at 287 to 291 (KMSKS). An ATP-binding site is contributed by K290.

This sequence belongs to the class-I aminoacyl-tRNA synthetase family. In terms of assembly, monomer. The cofactor is Zn(2+).

The protein localises to the cytoplasm. It carries out the reaction tRNA(Cys) + L-cysteine + ATP = L-cysteinyl-tRNA(Cys) + AMP + diphosphate. The polypeptide is Cysteine--tRNA ligase (Salinibacter ruber (strain DSM 13855 / M31)).